The chain runs to 185 residues: Ribosome-recycling factor (185 aa).

The protein belongs to the RRF family.

The protein localises to the cytoplasm. Responsible for the release of ribosomes from messenger RNA at the termination of protein biosynthesis. May increase the efficiency of translation by recycling ribosomes from one round of translation to another. This chain is Ribosome-recycling factor, found in Lactococcus lactis subsp. cremoris (strain SK11).